A 269-amino-acid chain; its full sequence is 2-dehydro-3-deoxyphosphooctonate aldolase (269 aa).

The protein belongs to the KdsA family.

It localises to the cytoplasm. It catalyses the reaction D-arabinose 5-phosphate + phosphoenolpyruvate + H2O = 3-deoxy-alpha-D-manno-2-octulosonate-8-phosphate + phosphate. The protein operates within carbohydrate biosynthesis; 3-deoxy-D-manno-octulosonate biosynthesis; 3-deoxy-D-manno-octulosonate from D-ribulose 5-phosphate: step 2/3. It functions in the pathway bacterial outer membrane biogenesis; lipopolysaccharide biosynthesis. The chain is 2-dehydro-3-deoxyphosphooctonate aldolase from Chlamydia trachomatis serovar A (strain ATCC VR-571B / DSM 19440 / HAR-13).